Here is a 615-residue protein sequence, read N- to C-terminus: Protein DBF4 homolog B (615 aa).

One can recognise a BRCT domain in the interval 43-133; sequence ARKHPFSGKS…DPKGSHPRPS (91 aa). 2 disordered regions span residues 93–141 and 264–293; these read REVK…DSVP and FEAP…AHTM. Over residues 275–284 the composition is skewed to basic and acidic residues; that stretch reads HTRESKDGEP. The DBF4-type zinc finger occupies 294–343; sequence PRRKKGYCECCQEAFEELHVHLQSAQHRSFALEAHLYAEVDRIIAQLSHS. The Zn(2+) site is built by Cys-301, Cys-304, His-314, and His-320. The tract at residues 371–407 is disordered; it reads TLHPHQPSHPRAASPRIRKEDSCQASVTQGRAAGQQR.

Forms a complex with CDC7. Note that CDC7 forms distinct complex either with DBF4/DBF4A or DBF4B. Such complexes are stable upon replication stress. In terms of processing, phosphorylated. As to expression, widely expressed. Highly expressed in testis.

Its subcellular location is the nucleus. Functionally, regulatory subunit for CDC7 which activates its kinase activity thereby playing a central role in DNA replication and cell proliferation. Required for progression of S and M phases. The complex CDC7-DBF4B selectively phosphorylates MCM2 subunit at 'Ser-40' and then is involved in regulating the initiation of DNA replication during cell cycle. The sequence is that of Protein DBF4 homolog B (DBF4B) from Homo sapiens (Human).